Consider the following 191-residue polypeptide: Ribosome hibernation promotion factor (191 aa).

The interval 100 to 123 is disordered; that stretch reads KQRQEGRPEPLPGPAEAEVNAQGS.

The protein belongs to the HPF/YfiA ribosome-associated protein family. Long HPF subfamily. In terms of assembly, interacts with 100S ribosomes.

Its subcellular location is the cytoplasm. In terms of biological role, required for dimerization of active 70S ribosomes into 100S ribosomes in stationary phase; 100S ribosomes are translationally inactive and sometimes present during exponential growth. The protein is Ribosome hibernation promotion factor of Deinococcus radiodurans (strain ATCC 13939 / DSM 20539 / JCM 16871 / CCUG 27074 / LMG 4051 / NBRC 15346 / NCIMB 9279 / VKM B-1422 / R1).